Consider the following 466-residue polypeptide: Ribulose bisphosphate carboxylase large chain (466 aa).

The residue at position 4 (Lys4) is an N6,N6,N6-trimethyllysine. Substrate-binding residues include Asn113 and Thr163. Residue Lys165 is the Proton acceptor of the active site. Substrate is bound at residue Lys167. Positions 191, 193, and 194 each coordinate Mg(2+). Position 191 is an N6-carboxylysine (Lys191). The active-site Proton acceptor is His284. Substrate contacts are provided by Arg285, His317, and Ser369.

This sequence belongs to the RuBisCO large chain family. Type I subfamily. Heterohexadecamer of 8 large chains and 8 small chains; disulfide-linked. The disulfide link is formed within the large subunit homodimers. The cofactor is Mg(2+). The disulfide bond which can form in the large chain dimeric partners within the hexadecamer appears to be associated with oxidative stress and protein turnover.

Its subcellular location is the plastid. The protein resides in the chloroplast. The enzyme catalyses 2 (2R)-3-phosphoglycerate + 2 H(+) = D-ribulose 1,5-bisphosphate + CO2 + H2O. It catalyses the reaction D-ribulose 1,5-bisphosphate + O2 = 2-phosphoglycolate + (2R)-3-phosphoglycerate + 2 H(+). Functionally, ruBisCO catalyzes two reactions: the carboxylation of D-ribulose 1,5-bisphosphate, the primary event in carbon dioxide fixation, as well as the oxidative fragmentation of the pentose substrate in the photorespiration process. Both reactions occur simultaneously and in competition at the same active site. The sequence is that of Ribulose bisphosphate carboxylase large chain from Barleria prionitis (Porcupine flower).